Consider the following 329-residue polypeptide: DNA-directed RNA polymerase subunit alpha (329 aa).

The alpha N-terminal domain (alpha-NTD) stretch occupies residues 1-235; it reads MQGSVTEFLK…EQLEAFVDLR (235 aa). The tract at residues 249-329 is alpha C-terminal domain (alpha-CTD); it reads FDPILLRPVD…NWPPASIADE (81 aa).

This sequence belongs to the RNA polymerase alpha chain family. Homodimer. The RNAP catalytic core consists of 2 alpha, 1 beta, 1 beta' and 1 omega subunit. When a sigma factor is associated with the core the holoenzyme is formed, which can initiate transcription.

The enzyme catalyses RNA(n) + a ribonucleoside 5'-triphosphate = RNA(n+1) + diphosphate. Its function is as follows. DNA-dependent RNA polymerase catalyzes the transcription of DNA into RNA using the four ribonucleoside triphosphates as substrates. The sequence is that of DNA-directed RNA polymerase subunit alpha from Pectobacterium atrosepticum (strain SCRI 1043 / ATCC BAA-672) (Erwinia carotovora subsp. atroseptica).